The sequence spans 506 residues: Voltage-gated potassium channel regulatory subunit KCNG4 (506 aa).

Residues 1-216 (MPMSSRDRDL…EMVEDPQSGL (216 aa)) are Cytoplasmic-facing. The chain crosses the membrane as a helical span at residues 217–238 (PGKVFACLSVLFVATTAVSLCV). The Extracellular segment spans residues 239–259 (STMPDFRAEEGKGECTRKCYY). The chain crosses the membrane as a helical span at residues 260–281 (IFVVESICVAWFSLEFCLRFVQ). At 282-292 (APNKCQFFRGP) the chain is on the cytoplasmic side. The chain crosses the membrane as a helical span at residues 293–312 (LNVIDILAISPYYVSLAVSD). Residues 313-326 (ESPEAGERPSSSSY) are Extracellular-facing. The helical; Voltage-sensor transmembrane segment at 327 to 351 (LEKVGLVLRVLRALRILYVMRLARH) threads the bilayer. The Cytoplasmic portion of the chain corresponds to 352–366 (SLGLQTLGLTVRRCA). A helical membrane pass occupies residues 367-388 (REFGLLMLFLAVAVTLFSPLVY). The Extracellular segment spans residues 389 to 403 (VAENESGRVLEFTSI). Positions 404–415 (PASYWWAIISMT) form an intramembrane region, helical. The Selectivity filter motif lies at 416–421 (TVGYGD). An intramembrane segment occupies 416–423 (TVGYGDMV). The Extracellular portion of the chain corresponds to 424 to 430 (PRSVPGQ). The helical transmembrane segment at 431-459 (MVALSSILSGILIMAFPATSIFHTFSHSY) threads the bilayer. Residues 460–506 (LELKREQEQVQARLRRLQNTNSASERELLSDVDDLVPEGLTSPGRYM) are Cytoplasmic-facing.

The protein belongs to the potassium channel family. G (TC 1.A.1.2) subfamily. Kv6.4/KCNG4 sub-subfamily. In terms of assembly, heterotetramer with KCNB1. Does not form homomultimer.

The protein resides in the cell membrane. Its function is as follows. Regulatory subunit of the voltage-gated potassium (Kv) channel which, when coassembled with KCNB1, modulates the kinetics parameters of the heterotetrameric channel namely the time course of activation, deactivation and inactivation and on the voltage-dependence of activation. Potassium channel subunit that does not form functional channels by itself. Reduces the deactivation rate. Modulates the threshold for activation by shifting by approximately 20 mV in hyperpolarizing direction. Markedly changes the inactivation by shifting the voltage dependence of inactivation by approximately 40 mV in hyperpolarizing direction. Acceleratee activation and enhances the time course of activation. This chain is Voltage-gated potassium channel regulatory subunit KCNG4, found in Mus musculus (Mouse).